We begin with the raw amino-acid sequence, 334 residues long: Malate dehydrogenase, cytoplasmic (334 aa).

11–17 contacts NAD(+); the sequence is GAAGQIA. Substrate-binding residues include Arg-92 and Arg-98. Residues Asn-105, Gln-112, and 129 to 131 contribute to the NAD(+) site; that span reads VGN. 2 residues coordinate substrate: Asn-131 and Arg-162. His-187 (proton acceptor) is an active-site residue.

This sequence belongs to the LDH/MDH superfamily. MDH type 2 family. Homodimer.

The protein localises to the cytoplasm. The protein resides in the cytosol. The catalysed reaction is (S)-malate + NAD(+) = oxaloacetate + NADH + H(+). The enzyme catalyses (S)-2-hydroxyglutarate + NAD(+) = 2-oxoglutarate + NADH + H(+). Its function is as follows. Catalyzes the reduction of aromatic alpha-keto acids in the presence of NADH. Plays essential roles in the malate-aspartate shuttle and the tricarboxylic acid cycle, important in mitochondrial NADH supply for oxidative phosphorylation. Catalyzes the reduction of 2-oxoglutarate to 2-hydroxyglutarate, leading to elevated reactive oxygen species (ROS). This Xenopus laevis (African clawed frog) protein is Malate dehydrogenase, cytoplasmic (mdh1).